Here is a 258-residue protein sequence, read N- to C-terminus: Tryptophan synthase alpha chain (258 aa).

Active-site proton acceptor residues include glutamate 52 and aspartate 63.

The protein belongs to the TrpA family. As to quaternary structure, tetramer of two alpha and two beta chains.

It catalyses the reaction (1S,2R)-1-C-(indol-3-yl)glycerol 3-phosphate + L-serine = D-glyceraldehyde 3-phosphate + L-tryptophan + H2O. Its pathway is amino-acid biosynthesis; L-tryptophan biosynthesis; L-tryptophan from chorismate: step 5/5. Functionally, the alpha subunit is responsible for the aldol cleavage of indoleglycerol phosphate to indole and glyceraldehyde 3-phosphate. The protein is Tryptophan synthase alpha chain of Streptococcus pneumoniae (strain 70585).